We begin with the raw amino-acid sequence, 188 residues long: Elongation factor P (188 aa).

Belongs to the elongation factor P family.

The protein resides in the cytoplasm. It participates in protein biosynthesis; polypeptide chain elongation. Its function is as follows. Involved in peptide bond synthesis. Stimulates efficient translation and peptide-bond synthesis on native or reconstituted 70S ribosomes in vitro. Probably functions indirectly by altering the affinity of the ribosome for aminoacyl-tRNA, thus increasing their reactivity as acceptors for peptidyl transferase. The protein is Elongation factor P of Leptospira borgpetersenii serovar Hardjo-bovis (strain JB197).